The chain runs to 308 residues: Cytochrome b (308 aa).

The next 4 helical transmembrane spans lie at 1-21, 45-66, 81-101, and 146-166; these read FGSLLGICLLTQIITGLLLAM, WLIRNLHANGASFFFICIYFHI, WNIGVILLLTLMATAFVGYVL, and FFALHFLLPFVIAGLTLVHLT. H51 and H65 together coordinate heme b. H150 and H164 together coordinate heme b. H169 is a binding site for a ubiquinone. 3 consecutive transmembrane segments (helical) span residues 194–214, 256–276, and 288–308; these read TKDILGFALMFILLVSLALFS, LGGVLALAASVLVLFLLPLLH, and LSQILFWALVANLLILTWVGS.

It belongs to the cytochrome b family. As to quaternary structure, the cytochrome bc1 complex contains 11 subunits: 3 respiratory subunits (MT-CYB, CYC1 and UQCRFS1), 2 core proteins (UQCRC1 and UQCRC2) and 6 low-molecular weight proteins (UQCRH/QCR6, UQCRB/QCR7, UQCRQ/QCR8, UQCR10/QCR9, UQCR11/QCR10 and a cleavage product of UQCRFS1). This cytochrome bc1 complex then forms a dimer. The cofactor is heme b.

The protein localises to the mitochondrion inner membrane. Component of the ubiquinol-cytochrome c reductase complex (complex III or cytochrome b-c1 complex) that is part of the mitochondrial respiratory chain. The b-c1 complex mediates electron transfer from ubiquinol to cytochrome c. Contributes to the generation of a proton gradient across the mitochondrial membrane that is then used for ATP synthesis. The polypeptide is Cytochrome b (MT-CYB) (Baeolophus inornatus (Oak titmouse)).